The following is a 431-amino-acid chain: Glutamate--tRNA ligase 1 (431 aa).

The short motif at 6 to 16 (PSPTGDMHIGN) is the 'HIGH' region element. The 'KMSKS' region signature appears at 235–239 (KMSKR). Lys238 contacts ATP.

The protein belongs to the class-I aminoacyl-tRNA synthetase family. Glutamate--tRNA ligase type 1 subfamily. Monomer.

It is found in the cytoplasm. It catalyses the reaction tRNA(Glu) + L-glutamate + ATP = L-glutamyl-tRNA(Glu) + AMP + diphosphate. Functionally, catalyzes the attachment of glutamate to tRNA(Glu) in a two-step reaction: glutamate is first activated by ATP to form Glu-AMP and then transferred to the acceptor end of tRNA(Glu). The protein is Glutamate--tRNA ligase 1 of Campylobacter jejuni subsp. jejuni serotype O:23/36 (strain 81-176).